Here is a 178-residue protein sequence, read N- to C-terminus: V-type proton ATPase subunit c''2 (178 aa).

At 1–24 (MSGVAIHASSWGAALVRISPYTFS) the chain is on the lumenal side. Residues 25 to 45 (AIGIAISIGVSVLGAAWGIYI) form a helical membrane-spanning segment. At 46–64 (TGSSLIGAAIEAPRITSKN) the chain is on the cytoplasmic side. A helical membrane pass occupies residues 65-85 (LISVIFCEAVAIYGVIVAIIL). The Lumenal segment spans residues 86-108 (QTKLESVPSSKMYDAESLRAGYA). A helical transmembrane segment spans residues 109 to 129 (IFASGIIVGFANLVCGLCVGI). Residues 130-147 (IGSSCALSDAQNSTLFVK) lie on the Cytoplasmic side of the membrane. A helical transmembrane segment spans residues 148-168 (ILVIEIFGSALGLFGVIVGII). The Lumenal segment spans residues 169–178 (MSAQATWPTK).

It belongs to the V-ATPase proteolipid subunit family. In terms of assembly, V-ATPase is a heteromultimeric enzyme composed of a peripheral catalytic V1 complex (components A to H) attached to an integral membrane V0 proton pore complex (components: a, c, c'', d and e). The proteolipid components c and c'' are present as a hexameric ring that forms the proton-conducting pore. Interacts with APD2.

The protein resides in the endoplasmic reticulum membrane. Its subcellular location is the golgi apparatus membrane. Functionally, proton-conducting pore forming subunit of the membrane integral V0 complex of vacuolar ATPase. V-ATPase is responsible for acidifying a variety of intracellular compartments in eukaryotic cells. The protein is V-type proton ATPase subunit c''2 (VHA-c''2) of Arabidopsis thaliana (Mouse-ear cress).